A 422-amino-acid polypeptide reads, in one-letter code: ATP-dependent RNA helicase RhlB (422 aa).

A Q motif motif is present at residues 9 to 37 (QKFSDFALHPLVIKAIENQGFYHCTPIQA). Positions 40 to 219 (FPITLAGRDV…FEQMNHPEYI (180 aa)) constitute a Helicase ATP-binding domain. Residue 53–60 (AQTGTGKT) coordinates ATP. The DEAD box signature appears at 165–168 (DEAD). The Helicase C-terminal domain occupies 245-390 (RLLQTLIEEE…TSEYNKEALL (146 aa)). The disordered stretch occupies residues 394-422 (PQPKRLQRHHRHYAGSRNQGASRKPRSPQ). The segment covering 398–407 (RLQRHHRHYA) has biased composition (basic residues).

The protein belongs to the DEAD box helicase family. RhlB subfamily. Component of the RNA degradosome, which is a multiprotein complex involved in RNA processing and mRNA degradation.

It is found in the cytoplasm. It carries out the reaction ATP + H2O = ADP + phosphate + H(+). In terms of biological role, DEAD-box RNA helicase involved in RNA degradation. Has RNA-dependent ATPase activity and unwinds double-stranded RNA. This Hamiltonella defensa subsp. Acyrthosiphon pisum (strain 5AT) protein is ATP-dependent RNA helicase RhlB.